We begin with the raw amino-acid sequence, 518 residues long: RNA-binding protein FUS (518 aa).

Residues 1–14 (MASNDYTQQATQSY) are compositionally biased toward polar residues. Positions 1–279 (MASNDYTQQA…SEQDNSDNNT (279 aa)) are disordered. Low complexity-rich tracts occupy residues 20-63 (QPGQ…GQTQ), 84-105 (SSQS…GQQP), and 116-126 (GSSQSSSYGQP). Positions 127–139 (QSGGYGQQSGYGG) are enriched in gly residues. The segment covering 140–166 (QQQSYGQQQSSYNPPQGYGQQNQYNSS) has biased composition (low complexity). 2 stretches are compositionally biased toward gly residues: residues 167–178 (SGGGGGGGGGNY) and 186–225 (SGGG…GGGY). An asymmetric dimethylarginine; alternate mark is found at Arg217 and Arg219. Arg217 and Arg219 each carry omega-N-methylarginine; alternate. Residues Arg235, Arg237, Arg241, Arg244, and Arg252 each carry the asymmetric dimethylarginine modification. Residues 237–252 (RGGGRGGRGGMGGSDR) are compositionally biased toward gly residues. At Ser270 the chain carries Phosphoserine. In terms of domain architecture, RRM spans 278 to 364 (NTIFVQGLGE…NPIKVSFATR (87 aa)). At Thr279 the chain carries Phosphothreonine. Lys327 participates in a covalent cross-link: Glycyl lysine isopeptide (Lys-Gly) (interchain with G-Cter in SUMO2). At Ser333 the chain carries Phosphoserine. 2 disordered regions span residues 368–417 (FNRG…QRAG) and 437–518 (CNQC…ERPY). Asymmetric dimethylarginine is present on residues Arg370, Arg376, Arg379, Arg381, and Arg387. Residues 370–414 (RGGGNGRGGRGRGGPMGRGGYGGGGSGGGGRGGFPSGGGGGGGQQ) show a composition bias toward gly residues. Arg400 is modified (asymmetric dimethylarginine; alternate). Omega-N-methylarginine; alternate is present on Arg400. Residues 415–446 (RAGDWKCPNPTCENMNFSWRNECNQCKAPKPD) form a RanBP2-type zinc finger. The span at 447–461 (GPGGGPGGSHMGGNY) shows a compositional bias: gly residues. A compositionally biased stretch (basic and acidic residues) spans 462 to 485 (GDDRRGRGGYDRGGYRGRGGDRGG). Asymmetric dimethylarginine is present on residues Arg466, Arg468, Arg473, Arg477, Arg479, Arg483, Arg487, and Arg490. The segment covering 486-500 (FRGGRGGGDRGGFGP) has biased composition (gly residues). Asymmetric dimethylarginine; alternate is present on Arg495. Omega-N-methylarginine; alternate is present on Arg495. Basic and acidic residues predominate over residues 503–518 (MDSRGEHRQDRRERPY).

This sequence belongs to the RRM TET family. As to quaternary structure, self-oligomerizes (via N-terminal region). Oligomerization is essential for chromatin binding. Component of nuclear riboprotein complexes. Interacts with ILF3, TDRD3 and SF1. Interacts through its C-terminus with SFRS13A. Interacts with OTUB1 and SARNP. Interacts with LRSAM1. Interacts with SAFB1 in a DNA-dependent manner; this interaction tethers FUS to chromatin. Interacts with MATR3. Interacts with SNRNP70 and POLR2A; these interactions couple RNA transcription and splicing. Interacts (through its RNA-binding domain) with RALY (through its RNA-binding domain); both are components of the same RNPs. In terms of processing, phosphorylated in its N-terminal serine residues upon induced DNA damage. ATM and DNA-PK are able to phosphorylate FUS N-terminal region.

It localises to the nucleus. Functionally, DNA/RNA-binding protein that plays a role in various cellular processes such as transcription regulation, RNA splicing, RNA transport, DNA repair and damage response. Binds to ssRNA containing the consensus sequence 5'-AGGUAA-3'. Binds to nascent pre-mRNAs and acts as a molecular mediator between RNA polymerase II and U1 small nuclear ribonucleoprotein thereby coupling transcription and splicing. Also binds its own pre-mRNA and autoregulates its expression; this autoregulation mechanism is mediated by non-sense-mediated decay. Plays a role in DNA repair mechanisms by promoting D-loop formation and homologous recombination during DNA double-strand break repair. In neuronal cells, plays crucial roles in dendritic spine formation and stability, RNA transport, mRNA stability and synaptic homeostasis. In Mus musculus (Mouse), this protein is RNA-binding protein FUS (Fus).